The following is a 406-amino-acid chain: Diaminopimelate decarboxylase (406 aa).

N6-(pyridoxal phosphate)lysine is present on Lys52. Pyridoxal 5'-phosphate is bound by residues Gly231 and 265-268 (EPGR). Arg268, Arg304, and Tyr308 together coordinate substrate. Catalysis depends on Cys334, which acts as the Proton donor. The substrate site is built by Glu335 and Tyr362. Tyr362 provides a ligand contact to pyridoxal 5'-phosphate.

The protein belongs to the Orn/Lys/Arg decarboxylase class-II family. LysA subfamily. As to quaternary structure, homodimer. Pyridoxal 5'-phosphate is required as a cofactor.

It catalyses the reaction meso-2,6-diaminopimelate + H(+) = L-lysine + CO2. Its pathway is amino-acid biosynthesis; L-lysine biosynthesis via DAP pathway; L-lysine from DL-2,6-diaminopimelate: step 1/1. Functionally, specifically catalyzes the decarboxylation of meso-diaminopimelate (meso-DAP) to L-lysine. The sequence is that of Diaminopimelate decarboxylase from Neisseria meningitidis serogroup A / serotype 4A (strain DSM 15465 / Z2491).